A 529-amino-acid polypeptide reads, in one-letter code: Phosphoenolpyruvate carboxykinase (ATP) (529 aa).

Substrate is bound at residue arginine 52. Arginine 130, asparagine 131, and phenylalanine 133 together coordinate Ca(2+). 2 residues coordinate substrate: tyrosine 191 and lysine 197. ATP is bound by residues lysine 197, histidine 216, and glycine 232–threonine 240. Residues lysine 197 and histidine 216 each coordinate Mn(2+). Aspartate 253 serves as a coordination point for Mn(2+). Glycine 267 contributes to the Ca(2+) binding site. ATP is bound by residues glutamate 281, arginine 319, arginine 438–phenylalanine 439, phenylalanine 439, and threonine 444. A substrate-binding site is contributed by arginine 319.

Belongs to the phosphoenolpyruvate carboxykinase (ATP) family. As to quaternary structure, dimer of dimers. Mn(2+) is required as a cofactor.

The protein localises to the cytoplasm. It catalyses the reaction oxaloacetate + ATP = phosphoenolpyruvate + ADP + CO2. The protein operates within carbohydrate biosynthesis; gluconeogenesis. With respect to regulation, allosterically activated by calcium. Its function is as follows. Involved in gluconeogenesis. Catalyzes the conversion of oxaloacetate (OAA) to phosphoenolpyruvate (PEP) through direct phosphoryl transfer between the nucleoside triphosphate and OAA. In Thermus thermophilus (strain ATCC 27634 / DSM 579 / HB8), this protein is Phosphoenolpyruvate carboxykinase (ATP).